A 474-amino-acid chain; its full sequence is 3-isopropylmalate dehydratase large subunit (474 aa).

Positions 353, 414, and 417 each coordinate [4Fe-4S] cluster.

This sequence belongs to the aconitase/IPM isomerase family. LeuC type 1 subfamily. As to quaternary structure, heterodimer of LeuC and LeuD. It depends on [4Fe-4S] cluster as a cofactor.

It catalyses the reaction (2R,3S)-3-isopropylmalate = (2S)-2-isopropylmalate. It functions in the pathway amino-acid biosynthesis; L-leucine biosynthesis; L-leucine from 3-methyl-2-oxobutanoate: step 2/4. Functionally, catalyzes the isomerization between 2-isopropylmalate and 3-isopropylmalate, via the formation of 2-isopropylmaleate. The chain is 3-isopropylmalate dehydratase large subunit from Xylella fastidiosa (strain 9a5c).